The chain runs to 231 residues: Aquaporin Z (231 aa).

Helical transmembrane passes span 9 to 29 and 34 to 54; these read CFGT…AAGF and IGFA…AFAV. Residues 63–65 carry the NPA 1 motif; sequence NPA. 3 helical membrane passes run 82–102, 129–149, and 156–176; these read VGYV…LYLI, YSML…LLVI, and FAPA…IHLI. The NPA 2 signature appears at 186-188; it reads NPA. Residues 202–222 form a helical membrane-spanning segment; sequence LEQLWFFWVVPIVGGIIGGLI.

Belongs to the MIP/aquaporin (TC 1.A.8) family. As to quaternary structure, homotetramer.

The protein resides in the cell inner membrane. The catalysed reaction is H2O(in) = H2O(out). Functionally, channel that permits osmotically driven movement of water in both directions. It is involved in the osmoregulation and in the maintenance of cell turgor during volume expansion in rapidly growing cells. It mediates rapid entry or exit of water in response to abrupt changes in osmolarity. The polypeptide is Aquaporin Z (Escherichia coli O6:H1 (strain CFT073 / ATCC 700928 / UPEC)).